An 82-amino-acid chain; its full sequence is MVDINQIPTRRPFHRRRKTCPFSGANAPKIDYKDVKLLQRYISERGKIVPSRITAVSQKKQRELARAIKRARFLGLLPYVVK.

Residues 1–20 (MVDINQIPTRRPFHRRRKTC) form a disordered region.

It belongs to the bacterial ribosomal protein bS18 family. As to quaternary structure, part of the 30S ribosomal subunit. Forms a tight heterodimer with protein bS6.

Functionally, binds as a heterodimer with protein bS6 to the central domain of the 16S rRNA, where it helps stabilize the platform of the 30S subunit. The polypeptide is Small ribosomal subunit protein bS18 (Chelativorans sp. (strain BNC1)).